A 91-amino-acid chain; its full sequence is MGIFDWKHWIVILIVVVLVFGTKKLKGLGSDVGESIKGFRKAMNDDDKPAEQPAPQPQQAQPAPQGSPLNQPHTIDAQAHKVDEPIRKDQV.

The chain crosses the membrane as a helical span at residues 1–21 (MGIFDWKHWIVILIVVVLVFG). A disordered region spans residues 41-91 (KAMNDDDKPAEQPAPQPQQAQPAPQGSPLNQPHTIDAQAHKVDEPIRKDQV). Positions 51–64 (EQPAPQPQQAQPAP) are enriched in low complexity. Basic and acidic residues predominate over residues 78–91 (QAHKVDEPIRKDQV).

The protein belongs to the TatA/E family. As to quaternary structure, the Tat system comprises two distinct complexes: a TatABC complex, containing multiple copies of TatA, TatB and TatC subunits, and a separate TatA complex, containing only TatA subunits. Substrates initially bind to the TatABC complex, which probably triggers association of the separate TatA complex to form the active translocon.

The protein resides in the cell inner membrane. Its function is as follows. Part of the twin-arginine translocation (Tat) system that transports large folded proteins containing a characteristic twin-arginine motif in their signal peptide across membranes. TatA could form the protein-conducting channel of the Tat system. The sequence is that of Sec-independent protein translocase protein TatA from Pseudomonas syringae pv. syringae (strain B728a).